The sequence spans 1237 residues: Zinc finger protein ZFAT (1237 aa).

The C2H2-type 1 zinc finger occupies 12–35 (FMCKCCNLFSPNQSELVTHVSEKH). The disordered stretch occupies residues 50–110 (RPLNTPENPN…GPLATEEGSR (61 aa)). The span at 70–81 (MKRKRGRPKGST) shows a compositional bias: basic residues. The C2H2-type 2; degenerate zinc finger occupies 116–141 (LECSKCCRKFSNTRQLRKHICIIVLN). Residues 147–188 (GDAGNESDLDLEKTYKEDDREKASKRPRAQKTEKVQKISGKE) form a disordered region. Residues 156 to 186 (DLEKTYKEDDREKASKRPRAQKTEKVQKISG) show a composition bias toward basic and acidic residues. 7 consecutive C2H2-type zinc fingers follow at residues 271 to 293 (FTCEYCNKVFKFKHSLQAHLRIH), 299 to 321 (YKCSQCSYASAIKANLNVHLRKH), 326 to 349 (FACDYCSFTCLSKGHLKVHIERVH), 354 to 377 (QHCRFCKKKYSDVKNLIKHIRDMH), 404 to 426 (YDCHICERKFKNELDRDRHMLVH), 432 to 454 (FACELCGHGATKYQALELHVRKH), and 458 to 481 (YVCALCLKKFVSSIRLRSHIREVH). Residues Cys-273, Cys-276, His-289, His-293, Cys-301, Cys-304, His-317, His-321, Cys-328, Cys-331, His-344, His-349, Cys-356, Cys-359, His-372, His-377, Cys-406, Cys-409, His-422, and His-426 each contribute to the Zn(2+) site. Zn(2+) contacts are provided by Cys-460, Cys-463, His-476, and His-481. 2 disordered regions span residues 551 to 576 (VPGDAHAPPPGPLATPQSESSSLSPC) and 601 to 671 (SDTS…CLRA). Residues 565–574 (TPQSESSSLS) are compositionally biased toward polar residues. Positions 601–617 (SDTSSAEPPAAAEATSD) are enriched in low complexity. 4 C2H2-type zinc fingers span residues 737–759 (LECEYCGKLFWYQVHFDMHVRTH), 765–788 (YYCSQCHYSSITKNCLKRHVIQKH), 793–817 (LKCPTDGCDYSTPDKYKLQAHLKVH), and 825–848 (YSCPVCEKSFSEDRLIKSHIKTNH). Cys-767, Cys-770, His-783, His-788, Cys-795, Cys-800, His-813, His-817, Cys-827, Cys-830, His-843, His-848, Cys-877, Cys-880, His-894, His-898, Cys-906, Cys-909, His-922, His-926, Cys-934, Cys-937, His-950, and Leu-953 together coordinate Zn(2+). The segment at 875–898 (MKCPYCDFYFMKNGSDLQRHIWAH) adopts a C2H2-type 14; degenerate zinc-finger fold. 5 consecutive C2H2-type zinc fingers follow at residues 904 to 926 (FKCSLCEYATRSKSNLKAHMNRH), 932 to 954 (HLCDMCGKKFKSKGTLKSHKLLH), 961 to 983 (FKCTVCDYTAAQKPQLLRHMEQH), 989 to 1012 (FRCAHCHYSCNISGSLKRHYNRKH), and 1036 to 1059 (LKCPVCSFVYGTKWEFNRHLKNKH).

In terms of tissue distribution, detected in spleen and thymus but not in liver, muscle, heart, kidney, brain, bone marrow or pancreas. Expressed in CD19+, CD4+ and CD8+ lymphocytes but not in CD11b+ lymphocytes or peritoneal macrophages (at protein level).

The protein resides in the nucleus. The protein localises to the cytoplasm. It localises to the cytosol. In terms of biological role, may be involved in transcriptional regulation. Overexpression causes down-regulation of a number of genes involved in the immune response. Some genes are also up-regulated. The polypeptide is Zinc finger protein ZFAT (Zfat) (Mus musculus (Mouse)).